Reading from the N-terminus, the 493-residue chain is Probable GTP-binding protein OBGM, mitochondrial (493 aa).

The N-terminal 28 residues, 1–28 (MWLIRAIVPVRYLGSYKRPQKPPWMRNP), are a transit peptide targeting the mitochondrion. The region spanning 48-303 (TRMRDRFTLY…AVLILELKSI (256 aa)) is the Obg domain. 2 disordered regions span residues 65–89 (SGCS…GGRG) and 146–215 (GEIP…EDDD). Residues 187–196 (SESDQDDTEQ) show a composition bias toward acidic residues. The OBG-type G domain occupies 304–476 (ADVGLVGMPN…LKDGLKMLVD (173 aa)). Residues 310–317 (GMPNAGKS) and 356–360 (DIPGL) each bind GTP.

It belongs to the TRAFAC class OBG-HflX-like GTPase superfamily. OBG GTPase family.

The protein localises to the mitochondrion. Its function is as follows. May bind GTP and have GTPase activity. The protein is Probable GTP-binding protein OBGM, mitochondrial (ATOBGM) of Arabidopsis thaliana (Mouse-ear cress).